The primary structure comprises 688 residues: Homoaconitase, mitochondrial (688 aa).

[4Fe-4S] cluster is bound by residues Cys-335, Cys-395, and Cys-398. The disordered stretch occupies residues 468–494; the sequence is SIDLPKSSGNTGATSEEPISEDDTSEA.

Belongs to the aconitase/IPM isomerase family. The cofactor is [4Fe-4S] cluster.

It localises to the mitochondrion. It carries out the reaction (2R,3S)-homoisocitrate = cis-homoaconitate + H2O. Its pathway is amino-acid biosynthesis; L-lysine biosynthesis via AAA pathway; L-alpha-aminoadipate from 2-oxoglutarate: step 3/5. Functionally, catalyzes the reversible hydration of cis-homoaconitate to (2R,3S)-homoisocitrate, a step in the alpha-aminoadipate pathway for lysine biosynthesis. The sequence is that of Homoaconitase, mitochondrial (LYS4) from Candida parapsilosis (Yeast).